The following is a 445-amino-acid chain: Ribulose bisphosphate carboxylase large chain (445 aa).

Asn-89 and Thr-139 together coordinate substrate. Lys-141 (proton acceptor) is an active-site residue. Lys-143 contributes to the substrate binding site. Residues Lys-167, Asp-169, and Glu-170 each coordinate Mg(2+). N6-carboxylysine is present on Lys-167. His-260 (proton acceptor) is an active-site residue. Residues Arg-261, His-293, and Ser-345 each contribute to the substrate site.

This sequence belongs to the RuBisCO large chain family. Type I subfamily. In terms of assembly, heterohexadecamer of 8 large chains and 8 small chains; disulfide-linked. The disulfide link is formed within the large subunit homodimers. Requires Mg(2+) as cofactor. Post-translationally, the disulfide bond which can form in the large chain dimeric partners within the hexadecamer appears to be associated with oxidative stress and protein turnover.

Its subcellular location is the plastid. It localises to the chloroplast. It carries out the reaction 2 (2R)-3-phosphoglycerate + 2 H(+) = D-ribulose 1,5-bisphosphate + CO2 + H2O. The enzyme catalyses D-ribulose 1,5-bisphosphate + O2 = 2-phosphoglycolate + (2R)-3-phosphoglycerate + 2 H(+). RuBisCO catalyzes two reactions: the carboxylation of D-ribulose 1,5-bisphosphate, the primary event in carbon dioxide fixation, as well as the oxidative fragmentation of the pentose substrate in the photorespiration process. Both reactions occur simultaneously and in competition at the same active site. This is Ribulose bisphosphate carboxylase large chain from Callicarpa dichotoma (Purple beautyberry).